We begin with the raw amino-acid sequence, 824 residues long: ABC transporter B family member 7 (824 aa).

The segment at 41-101 (RNSVKFNLDT…NKNNKNKINN (61 aa)) is disordered. A compositionally biased stretch (low complexity) spans 63 to 101 (NNNKNNNNNNNNNNNNNNNNNNNNNNNNNNKNNKNKINN). 6 helical membrane-spanning segments follow: residues 164–184 (IWYFVFAFLALSITTLCQLAL), 252–272 (WIIIIVLVQTPFLFARYLLFT), 325–345 (LSTLVRCSLQLIGGLLILVFL), 347–367 (WKVTLLMISFLVILLISFLVF), 431–451 (AFWISFGSLLVMGTIIGIYGF), and 461–481 (ILLLQFILYSLMITASMNGLI). An ABC transmembrane type-1 domain is found at 167–489 (FVFAFLALSI…LIGSINEIQK (323 aa)). Positions 521–767 (ISFDNVYFNN…STSFYVTSVL (247 aa)) constitute an ABC transporter domain. An ATP-binding site is contributed by 570 to 576 (GPSQSKE). Residues 772–813 (NKYNNNNNNNNNNNNNNNNNNNNNNNNNNNNNNNNNNNNINN) are disordered.

It belongs to the ABC transporter superfamily. ABCB family.

It is found in the membrane. The chain is ABC transporter B family member 7 (abcB7) from Dictyostelium discoideum (Social amoeba).